Here is a 136-residue protein sequence, read N- to C-terminus: NLP effector protein 13 (136 aa).

The short motif at 1–9 (MYSWYFPKD) is the Conserved undecapeptide motif I element. The Hepta-peptide GHRHDWE motif II motif lies at 16-22 (GHRHDWE).

The protein belongs to the Necrosis inducing protein (NPP1) family.

The protein resides in the secreted. In terms of biological role, secreted effector that contributes moderately to virulence during infection by P.capsici. Causes only small yellow areas at 3 days after inoculation of host C.annuum leaves; these areas expand somewhat and became necrotic at 7 days after inoculation. Leads only to chlorotic areas, without necrosis at 7 days after non-host N.benthamiana leaves infection. This Phytophthora capsici protein is NLP effector protein 13.